The following is a 145-amino-acid chain: Ribosome-binding factor A (145 aa).

A compositionally biased stretch (basic residues) spans 1-10 (MKRPSSHGRR). 2 disordered regions span residues 1 to 21 (MKRP…RQLR) and 124 to 145 (DDPK…KDED).

The protein belongs to the RbfA family. Monomer. Binds 30S ribosomal subunits, but not 50S ribosomal subunits or 70S ribosomes.

It is found in the cytoplasm. One of several proteins that assist in the late maturation steps of the functional core of the 30S ribosomal subunit. Associates with free 30S ribosomal subunits (but not with 30S subunits that are part of 70S ribosomes or polysomes). Required for efficient processing of 16S rRNA. May interact with the 5'-terminal helix region of 16S rRNA. The protein is Ribosome-binding factor A of Phenylobacterium zucineum (strain HLK1).